Consider the following 29-residue polypeptide: GLYCCQPKPNGQMMCNRWCEINSRCCGRR.

Intrachain disulfides connect C4-C19, C5-C25, and C15-C26. C26 carries the post-translational modification Cysteine amide.

This sequence belongs to the conotoxin M superfamily. As to expression, expressed by the venom duct.

Its subcellular location is the secreted. The protein is Conotoxin Bu17 of Conus bullatus (Bubble cone).